A 209-amino-acid polypeptide reads, in one-letter code: Nascent polypeptide-associated complex subunit alpha (209 aa).

Positions 1-21 are enriched in basic and acidic residues; sequence MSNPRVEELPDEEPKKTTVQE. Disordered regions lie at residues 1–51 and 121–175; these read MSNP…HNRN and QLAS…DKDI. Acidic residues predominate over residues 22 to 36; the sequence is HEDDSSDDSEVEEVG. The 66-residue stretch at 49–114 folds into the NAC-A/B domain; sequence NRNEKKARKA…AKIEDVNAAA (66 aa). Basic and acidic residues predominate over residues 127-150; sequence AEDHSGHNHGEPSKAVEADEKKED. The span at 151–166 shows a compositional bias: acidic residues; that stretch reads KEDDEDEEEEEEEEVD. Positions 170–209 constitute a UBA domain; that stretch reads LEDKDIELVMTQANVSRNKAVKALKENDNDIVNSIMALSI.

This sequence belongs to the NAC-alpha family. As to quaternary structure, part of the nascent polypeptide-associated complex (NAC), consisting of EGD2 and EGD1. NAC associates with ribosomes via EGD1.

The protein localises to the cytoplasm. The protein resides in the nucleus. Its function is as follows. Component of the nascent polypeptide-associated complex (NAC), a dynamic component of the ribosomal exit tunnel, protecting the emerging polypeptides from interaction with other cytoplasmic proteins to ensure appropriate nascent protein targeting. The NAC complex also promotes mitochondrial protein import by enhancing productive ribosome interactions with the outer mitochondrial membrane and blocks the inappropriate interaction of ribosomes translating non-secretory nascent polypeptides with translocation sites in the membrane of the endoplasmic reticulum. EGD2 may also be involved in transcription regulation. The sequence is that of Nascent polypeptide-associated complex subunit alpha (EGD2) from Gibberella zeae (strain ATCC MYA-4620 / CBS 123657 / FGSC 9075 / NRRL 31084 / PH-1) (Wheat head blight fungus).